We begin with the raw amino-acid sequence, 168 residues long: Protein GrpE (168 aa).

It belongs to the GrpE family. In terms of assembly, homodimer.

Its subcellular location is the cytoplasm. Functionally, participates actively in the response to hyperosmotic and heat shock by preventing the aggregation of stress-denatured proteins, in association with DnaK and GrpE. It is the nucleotide exchange factor for DnaK and may function as a thermosensor. Unfolded proteins bind initially to DnaJ; upon interaction with the DnaJ-bound protein, DnaK hydrolyzes its bound ATP, resulting in the formation of a stable complex. GrpE releases ADP from DnaK; ATP binding to DnaK triggers the release of the substrate protein, thus completing the reaction cycle. Several rounds of ATP-dependent interactions between DnaJ, DnaK and GrpE are required for fully efficient folding. In Thermotoga neapolitana (strain ATCC 49049 / DSM 4359 / NBRC 107923 / NS-E), this protein is Protein GrpE.